A 345-amino-acid chain; its full sequence is Hydroxymethylglutaryl-CoA synthase (345 aa).

Asp28 is a binding site for (3S)-3-hydroxy-3-methylglutaryl-CoA. The Proton donor/acceptor role is filled by Glu80. (3S)-3-hydroxy-3-methylglutaryl-CoA contacts are provided by Cys112 and Thr153. Cys112 acts as the Acyl-thioester intermediate in catalysis. Arg199 contributes to the CoA binding site. 2 residues coordinate (3S)-3-hydroxy-3-methylglutaryl-CoA: Thr201 and His234. His234 functions as the Proton donor/acceptor in the catalytic mechanism. A CoA-binding site is contributed by Lys239. 3 residues coordinate (3S)-3-hydroxy-3-methylglutaryl-CoA: Arg243, Asn266, and Ser296.

The protein belongs to the thiolase-like superfamily. Archaeal HMG-CoA synthase family. In terms of assembly, interacts with acetoacetyl-CoA thiolase that catalyzes the precedent step in the pathway and with a DUF35 protein. The acetoacetyl-CoA thiolase/HMG-CoA synthase complex channels the intermediate via a fused CoA-binding site, which allows for efficient coupling of the endergonic thiolase reaction with the exergonic HMGCS reaction.

It carries out the reaction acetoacetyl-CoA + acetyl-CoA + H2O = (3S)-3-hydroxy-3-methylglutaryl-CoA + CoA + H(+). It participates in metabolic intermediate biosynthesis; (R)-mevalonate biosynthesis; (R)-mevalonate from acetyl-CoA: step 2/3. Functionally, catalyzes the condensation of acetyl-CoA with acetoacetyl-CoA to form 3-hydroxy-3-methylglutaryl-CoA (HMG-CoA). Functions in the mevalonate (MVA) pathway leading to isopentenyl diphosphate (IPP), a key precursor for the biosynthesis of isoprenoid compounds that are building blocks of archaeal membrane lipids. This is Hydroxymethylglutaryl-CoA synthase from Methanocaldococcus jannaschii (strain ATCC 43067 / DSM 2661 / JAL-1 / JCM 10045 / NBRC 100440) (Methanococcus jannaschii).